Here is a 255-residue protein sequence, read N- to C-terminus: uncharacterized protein (255 aa).

The Microbody targeting signal signature appears at 253–255 (SKI).

It belongs to the enoyl-CoA hydratase/isomerase family.

It localises to the peroxisome. This is an uncharacterized protein from Caenorhabditis elegans.